A 175-amino-acid chain; its full sequence is Pancreatic beta cell growth factor (175 aa).

The first 26 residues, 1-26 (MMLPMTLCRMSWMLLSCLMFLSWVEG), serve as a signal peptide directing secretion. The C-type lectin domain occupies 38-175 (ITCPQGSVAY…ELPYICKFKV (138 aa)). Cystine bridges form between Cys40–Cys51, Cys68–Cys171, and Cys146–Cys163.

In terms of tissue distribution, expressed only in CW animals pancreas and to a lesser extent in duodenum. In pancreas it is found in acinar cells, but not in islets.

The protein localises to the secreted. Functionally, constituent of ilotropin, which is a partially purified preparation of cellophane wrapping (CW) pancreata. Capable of initiating duct cell proliferation, a prerequisite for islet neogenesis. This chain is Pancreatic beta cell growth factor (INGAP), found in Mesocricetus auratus (Golden hamster).